Here is a 74-residue protein sequence, read N- to C-terminus: Protein translocase subunit SecE (74 aa).

The Cytoplasmic segment spans residues 1 to 36 (MKTDFNQKIEQLKEFIEECRRVWLVLKKPTKDEYLA). A helical transmembrane segment spans residues 37–62 (VAKVTALGISLLGIIGYIIHVPATYI). Residues 63–74 (KGILKPPTTPRV) are Extracellular-facing.

The protein belongs to the SecE/SEC61-gamma family. As to quaternary structure, component of the Sec protein translocase complex. Heterotrimer consisting of alpha (SecY), beta (SecG) and gamma (SecE) subunits. The heterotrimers can form oligomers, although 1 heterotrimer is thought to be able to translocate proteins. Interacts with the ribosome. May interact with SecDF, and other proteins may be involved.

Its subcellular location is the cell membrane. Essential subunit of the protein translocation channel SecYEG. Clamps together the 2 halves of SecY. May contact the channel plug during translocation. This Methanocaldococcus jannaschii (strain ATCC 43067 / DSM 2661 / JAL-1 / JCM 10045 / NBRC 100440) (Methanococcus jannaschii) protein is Protein translocase subunit SecE.